The sequence spans 427 residues: Homoprotocatechuate catabolism bifunctional isomerase/decarboxylase (427 aa).

Approximate repeat units lie at residues 1-202 and 203-405; these read MKGT…LENP and VVDE…VGDE. Positions 276, 278, and 307 each coordinate a divalent metal cation.

This sequence belongs to the FAH family. Monomer. It depends on Mg(2+) as a cofactor.

The catalysed reaction is (2E,4Z)-5-hydroxypenta-2,4-diene-1,2,5-tricarboxylate = (3E,5R)-5-carboxy-2-oxohept-3-enedioate. It catalyses the reaction (3E,5R)-5-carboxy-2-oxohept-3-enedioate + H(+) = (4Z)-2-oxohept-4-enedioate + CO2. It functions in the pathway aromatic compound metabolism; 4-hydroxyphenylacetate degradation; pyruvate and succinate semialdehyde from 4-hydroxyphenylacetate: step 4/7. Its pathway is aromatic compound metabolism; 4-hydroxyphenylacetate degradation; pyruvate and succinate semialdehyde from 4-hydroxyphenylacetate: step 5/7. Decarboxylates OPET (5-oxo-pent-3-ene-1,2,5-tricarboxylic acid) into HHDD (2-hydroxy-hept-2,4-diene-1,7-dioate) and isomerizes it to OHED (2-oxo-hept-3-ene-1,7-dioate). This Escherichia coli protein is Homoprotocatechuate catabolism bifunctional isomerase/decarboxylase (hpcE).